A 279-amino-acid chain; its full sequence is Large ribosomal subunit protein uL2 (279 aa).

2 disordered regions span residues 29 to 53 (PEKS…TTRH) and 224 to 279 (VAMN…KKRK). Basic and acidic residues predominate over residues 253-268 (KEGRTRHPNKESDKLI). Over residues 269 to 279 (VRRRNAGKKRK) the composition is skewed to basic residues.

This sequence belongs to the universal ribosomal protein uL2 family. In terms of assembly, part of the 50S ribosomal subunit. Forms a bridge to the 30S subunit in the 70S ribosome.

In terms of biological role, one of the primary rRNA binding proteins. Required for association of the 30S and 50S subunits to form the 70S ribosome, for tRNA binding and peptide bond formation. It has been suggested to have peptidyltransferase activity; this is somewhat controversial. Makes several contacts with the 16S rRNA in the 70S ribosome. In Leifsonia xyli subsp. xyli (strain CTCB07), this protein is Large ribosomal subunit protein uL2.